The following is a 147-amino-acid chain: Large ribosomal subunit protein bL9 (147 aa).

The protein belongs to the bacterial ribosomal protein bL9 family.

Its function is as follows. Binds to the 23S rRNA. In Bdellovibrio bacteriovorus (strain ATCC 15356 / DSM 50701 / NCIMB 9529 / HD100), this protein is Large ribosomal subunit protein bL9.